A 232-amino-acid chain; its full sequence is Ubiquinone biosynthesis O-methyltransferase (232 aa).

Residues Arg-36, Gly-55, Asp-76, and Met-120 each coordinate S-adenosyl-L-methionine.

The protein belongs to the methyltransferase superfamily. UbiG/COQ3 family.

The catalysed reaction is a 3-demethylubiquinol + S-adenosyl-L-methionine = a ubiquinol + S-adenosyl-L-homocysteine + H(+). It carries out the reaction a 3-(all-trans-polyprenyl)benzene-1,2-diol + S-adenosyl-L-methionine = a 2-methoxy-6-(all-trans-polyprenyl)phenol + S-adenosyl-L-homocysteine + H(+). It participates in cofactor biosynthesis; ubiquinone biosynthesis. In terms of biological role, O-methyltransferase that catalyzes the 2 O-methylation steps in the ubiquinone biosynthetic pathway. In Paraburkholderia phytofirmans (strain DSM 17436 / LMG 22146 / PsJN) (Burkholderia phytofirmans), this protein is Ubiquinone biosynthesis O-methyltransferase.